A 342-amino-acid polypeptide reads, in one-letter code: UDP-3-O-acylglucosamine N-acyltransferase (342 aa).

Catalysis depends on H238, which acts as the Proton acceptor.

This sequence belongs to the transferase hexapeptide repeat family. LpxD subfamily. Homotrimer.

It catalyses the reaction a UDP-3-O-[(3R)-3-hydroxyacyl]-alpha-D-glucosamine + a (3R)-hydroxyacyl-[ACP] = a UDP-2-N,3-O-bis[(3R)-3-hydroxyacyl]-alpha-D-glucosamine + holo-[ACP] + H(+). It functions in the pathway bacterial outer membrane biogenesis; LPS lipid A biosynthesis. Its function is as follows. Catalyzes the N-acylation of UDP-3-O-acylglucosamine using 3-hydroxyacyl-ACP as the acyl donor. Is involved in the biosynthesis of lipid A, a phosphorylated glycolipid that anchors the lipopolysaccharide to the outer membrane of the cell. The sequence is that of UDP-3-O-acylglucosamine N-acyltransferase from Tolumonas auensis (strain DSM 9187 / NBRC 110442 / TA 4).